A 349-amino-acid polypeptide reads, in one-letter code: Phosphoribosylformylglycinamidine cyclo-ligase (349 aa).

It belongs to the AIR synthase family.

Its subcellular location is the cytoplasm. The catalysed reaction is 2-formamido-N(1)-(5-O-phospho-beta-D-ribosyl)acetamidine + ATP = 5-amino-1-(5-phospho-beta-D-ribosyl)imidazole + ADP + phosphate + H(+). It functions in the pathway purine metabolism; IMP biosynthesis via de novo pathway; 5-amino-1-(5-phospho-D-ribosyl)imidazole from N(2)-formyl-N(1)-(5-phospho-D-ribosyl)glycinamide: step 2/2. This chain is Phosphoribosylformylglycinamidine cyclo-ligase, found in Bordetella petrii (strain ATCC BAA-461 / DSM 12804 / CCUG 43448).